Reading from the N-terminus, the 153-residue chain is Large ribosomal subunit protein bL9 (153 aa).

Belongs to the bacterial ribosomal protein bL9 family.

Functionally, binds to the 23S rRNA. This Blochmanniella pennsylvanica (strain BPEN) protein is Large ribosomal subunit protein bL9.